The primary structure comprises 203 residues: uncharacterized protein (203 aa).

4 helical membrane-spanning segments follow: residues 9-29 (YNVF…IVVA), 42-62 (FLFL…FFDV), 86-106 (SGVF…ALLV), and 126-146 (YPLL…SIGL). Basic and acidic residues-rich tracts occupy residues 164–174 (GEPTAADKTDS) and 182–191 (DQTKSKKDGD). The disordered stretch occupies residues 164–203 (GEPTAADKTDSRPVVVDLDQTKSKKDGDNPPQASGDMTSL). Positions 194–203 (PQASGDMTSL) are enriched in polar residues.

The protein localises to the cell membrane. This is an uncharacterized protein from Mycoplasma pneumoniae (strain ATCC 29342 / M129 / Subtype 1) (Mycoplasmoides pneumoniae).